Reading from the N-terminus, the 176-residue chain is NAD(P)H-quinone oxidoreductase subunit 6, chloroplastic (176 aa).

A run of 5 helical transmembrane segments spans residues 10–30 (FLLV…VLLT), 32–52 (PIFS…FHIP), 60–80 (AAQL…AVMF), 107–127 (IFVS…IWTT), and 152–172 (FFLP…GAIA).

Belongs to the complex I subunit 6 family. As to quaternary structure, NDH is composed of at least 16 different subunits, 5 of which are encoded in the nucleus.

The protein resides in the plastid. It localises to the chloroplast thylakoid membrane. It catalyses the reaction a plastoquinone + NADH + (n+1) H(+)(in) = a plastoquinol + NAD(+) + n H(+)(out). The catalysed reaction is a plastoquinone + NADPH + (n+1) H(+)(in) = a plastoquinol + NADP(+) + n H(+)(out). Functionally, NDH shuttles electrons from NAD(P)H:plastoquinone, via FMN and iron-sulfur (Fe-S) centers, to quinones in the photosynthetic chain and possibly in a chloroplast respiratory chain. The immediate electron acceptor for the enzyme in this species is believed to be plastoquinone. Couples the redox reaction to proton translocation, and thus conserves the redox energy in a proton gradient. The protein is NAD(P)H-quinone oxidoreductase subunit 6, chloroplastic (ndhG) of Buxus microphylla (Littleleaf boxwood).